The sequence spans 344 residues: Beta-1,4-galactosyltransferase 4 (344 aa).

Over 1–12 the chain is Cytoplasmic; the sequence is MGCNPPYLLSYR. The helical; Signal-anchor for type II membrane protein transmembrane segment at 13 to 38 threads the bilayer; that stretch reads LRLLLLFTLCLTVLGWATSNYFVGAI. At 39–344 the chain is on the lumenal side; that stretch reads QVIPRAKNFM…NITVDFWTAA (306 aa). The cysteines at positions 77 and 118 are disulfide-linked. UDP-alpha-D-galactose contacts are provided by residues 129-133, 168-170, and 195-196; these read PHRNR, FNR, and VD. Cys189 and Cys208 form a disulfide bridge. Asp196 lines the Mn(2+) pocket. N-linked (GlcNAc...) asparagine glycosylation occurs at Asn220. The UDP-alpha-D-galactose site is built by Tyr224 and Trp256. An N-acetyl-D-glucosamine-binding site is contributed by 258–261; sequence GEDD. Residue His289 participates in Mn(2+) binding. 289–291 serves as a coordination point for UDP-alpha-D-galactose; sequence HTR. Arg301 lines the N-acetyl-D-glucosamine pocket. The N-linked (GlcNAc...) asparagine glycan is linked to Asn335.

Belongs to the glycosyltransferase 7 family. As to quaternary structure, interacts with SLC35A2/UGT1. Mn(2+) is required as a cofactor.

Its subcellular location is the golgi apparatus membrane. It is found in the secreted. The catalysed reaction is N-acetyl-D-glucosamine + UDP-alpha-D-galactose = beta-D-galactosyl-(1-&gt;4)-N-acetyl-D-glucosamine + UDP + H(+). It carries out the reaction a beta-D-GlcNAc-(1-&gt;3)-beta-D-Gal-(1-&gt;4)-beta-D-Glc-(1&lt;-&gt;1)-Cer(d18:1(4E)) + UDP-alpha-D-galactose = a neolactoside nLc4Cer(d18:1(4E)) + UDP + H(+). It catalyses the reaction 3-O-{beta-D-galactosyl-(1-&gt;3)-[6-O-sulfo-N-acetyl-beta-D-glucosaminyl-(1-&gt;6)]-N-acetyl-alpha-D-galactosaminyl}-L-seryl-[protein] + UDP-alpha-D-galactose = 3-O-{beta-D-galactosyl-(1-&gt;3)-[beta-D-galactosyl-(1-&gt;4)-6-O-sulfo-N-acetyl-beta-D-glucosaminyl-(1-&gt;6)]-N-acetyl-alpha-D-galactosaminyl}-L-seryl-[protein] + UDP + H(+). The enzyme catalyses 3-O-{beta-D-galactosyl-(1-&gt;3)-[6-O-sulfo-N-acetyl-beta-D-glucosaminyl-(1-&gt;6)]-N-acetyl-alpha-D-galactosaminyl}-L-threonyl-[protein] + UDP-alpha-D-galactose = 3-O-{beta-D-galactosyl-(1-&gt;3)-[beta-D-galactosyl-(1-&gt;4)-6-O-sulfo-N-acetyl-beta-D-glucosaminyl-(1-&gt;6)]-N-acetyl-alpha-D-galactosaminyl}-L-threonyl-[protein] + UDP + H(+). It functions in the pathway protein modification; protein glycosylation. The protein operates within glycolipid biosynthesis. Functionally, galactose (Gal) transferase involved in the synthesis of terminal N-acetyllactosamine (LacNac) unit present on glycan chains of glycoproteins and glycosphingolipids. Catalyzes the transfer of Gal residue via a beta1-&gt;4 linkage from UDP-Gal to the non-reducing terminal N-acetyl glucosamine 6-O-sulfate (6-O-sulfoGlcNAc) in the linearly growing chain of both N- and O-linked keratan sulfate proteoglycans. Cooperates with B3GNT7 N-acetyl glucosamine transferase and CHST6 and CHST1 sulfotransferases to construct and elongate mono- and disulfated disaccharide units [-&gt;3Galbeta1-&gt;4(6-sulfoGlcNAcbeta)1-&gt;] and [-&gt;3(6-sulfoGalbeta)1-&gt;4(6-sulfoGlcNAcbeta)1-&gt;] within keratan sulfate polymer. Transfers Gal residue via a beta1-&gt;4 linkage to terminal 6-O-sulfoGlcNAc within the LacNac unit of core 2 O-glycans forming 6-sulfo-sialyl-Lewis X (sLex). May contribute to the generation of sLex epitope on mucin-type glycoproteins that serve as ligands for SELL/L-selectin, a major regulator of leukocyte migration. In the biosynthesis pathway of neolacto-series glycosphingolipids, transfers Gal residue via a beta1-&gt;4 linkage to terminal GlcNAc of a lactotriaosylceramide (Lc3Cer) acceptor to form a neolactotetraosylceramide. This is Beta-1,4-galactosyltransferase 4 (B4galt4) from Rattus norvegicus (Rat).